Here is an 89-residue protein sequence, read N- to C-terminus: Porphobilinogen deaminase (89 aa).

The protein belongs to the HMBS family. In terms of assembly, monomer. The cofactor is dipyrromethane.

The enzyme catalyses 4 porphobilinogen + H2O = hydroxymethylbilane + 4 NH4(+). The protein operates within porphyrin-containing compound metabolism; protoporphyrin-IX biosynthesis; coproporphyrinogen-III from 5-aminolevulinate: step 2/4. Tetrapolymerization of the monopyrrole PBG into the hydroxymethylbilane pre-uroporphyrinogen in several discrete steps. The protein is Porphobilinogen deaminase (hemC) of Dickeya chrysanthemi (Pectobacterium chrysanthemi).